A 249-amino-acid polypeptide reads, in one-letter code: uncharacterized protein (249 aa).

The S4 RNA-binding domain occupies 7-64 (PRVHVFLAEKGVGSRRFCEELIRKKLVRVNNTIAKLGDKVTLGDRIIYKKQIFVFKDF). Catalysis depends on aspartate 112, which acts as the Nucleophile.

This sequence belongs to the pseudouridine synthase RsuA family.

It carries out the reaction a uridine in RNA = a pseudouridine in RNA. This is an uncharacterized protein from Borreliella burgdorferi (strain ATCC 35210 / DSM 4680 / CIP 102532 / B31) (Borrelia burgdorferi).